The sequence spans 216 residues: Probable GTP-binding protein EngB (216 aa).

In terms of domain architecture, EngB-type G spans Gly37–Glu214. GTP contacts are provided by residues Gly45 to Ser52, Gly72 to Glu76, Asp92 to Gly95, Thr159 to Asp162, and Thr193 to Ser195. 2 residues coordinate Mg(2+): Ser52 and Thr74.

This sequence belongs to the TRAFAC class TrmE-Era-EngA-EngB-Septin-like GTPase superfamily. EngB GTPase family. Mg(2+) serves as cofactor.

Necessary for normal cell division and for the maintenance of normal septation. This chain is Probable GTP-binding protein EngB, found in Rhodopseudomonas palustris (strain TIE-1).